Reading from the N-terminus, the 407-residue chain is RING-H2 finger protein ATL43 (407 aa).

Positions 1–22 (MSSSSLILLFSTLSLFLNVSLA) are cleaved as a signal peptide. The helical transmembrane segment at 57–77 (GIAVVIAVLTAFFSLTFLLLL) threads the bilayer. The segment at 146–188 (CAVCLARFEPTEVLRLLPKCKHAFHVECVDTWLDAHSTCPLCR) adopts an RING-type; atypical zinc-finger fold.

It belongs to the RING-type zinc finger family. ATL subfamily.

Its subcellular location is the membrane. It carries out the reaction S-ubiquitinyl-[E2 ubiquitin-conjugating enzyme]-L-cysteine + [acceptor protein]-L-lysine = [E2 ubiquitin-conjugating enzyme]-L-cysteine + N(6)-ubiquitinyl-[acceptor protein]-L-lysine.. It functions in the pathway protein modification; protein ubiquitination. This chain is RING-H2 finger protein ATL43 (ATL43), found in Arabidopsis thaliana (Mouse-ear cress).